An 88-amino-acid chain; its full sequence is UPF0250 protein SO_1163 (88 aa).

The protein belongs to the UPF0250 family.

This Shewanella oneidensis (strain ATCC 700550 / JCM 31522 / CIP 106686 / LMG 19005 / NCIMB 14063 / MR-1) protein is UPF0250 protein SO_1163.